Reading from the N-terminus, the 639-residue chain is Chaperone protein DnaK 1 (639 aa).

Thr-199 carries the phosphothreonine; by autocatalysis modification. A compositionally biased stretch (low complexity) spans 603–612 (QQQAQAQQAP). A disordered region spans residues 603-639 (QQQAQAQQAPGGEGEQEAKQDDNVVDAEFEEVKDEKK). Residues 625-639 (NVVDAEFEEVKDEKK) show a composition bias toward acidic residues.

The protein belongs to the heat shock protein 70 family.

Acts as a chaperone. This chain is Chaperone protein DnaK 1, found in Photobacterium profundum (strain SS9).